Consider the following 113-residue polypeptide: Hydrogenase maturation factor HypA 2 (113 aa).

A Ni(2+)-binding site is contributed by His-2. Zn(2+) contacts are provided by Cys-73, Cys-76, Cys-89, and Cys-92.

It belongs to the HypA/HybF family.

Involved in the maturation of [NiFe] hydrogenases. Required for nickel insertion into the metal center of the hydrogenase. In Bradyrhizobium diazoefficiens (strain JCM 10833 / BCRC 13528 / IAM 13628 / NBRC 14792 / USDA 110), this protein is Hydrogenase maturation factor HypA 2.